The chain runs to 110 residues: Glycine cleavage system H-like protein (110 aa).

The 88-residue stretch at 10 to 97 folds into the Lipoyl-binding domain; sequence VEKVGDLYVF…PEENWLFKLD (88 aa). An ADP-ribosyl aspartic acid modification is found at D27. K56 is subject to N6-lipoyllysine.

As to quaternary structure, lipoylated GcvH-L directly interacts with SAV0325, which reverses the SirTM-mediated mono-ADP-ribosylation of GcvH-L, and with the oxidoreductase SAV0322. In terms of processing, is lipoylated on K-56 by LplA2 (SAV0327) and then mono-ADP-ribosylated, probably on D-27, by SirTM (SAV0326). The mono-ADP-ribosylation state of GcvH-L might regulate the availability of the lipoyl moiety for redox reactions; ADP-ribosylation would inhibit the interaction of the oxidoreductase with GcvH-L when it is not required, thus ADP-ribosylation of GcvH-L might be acting to keep the response 'off' under non-stress conditions.

In terms of biological role, may act as a carrier protein for the ROS scavenging lipoyl moiety and/or as a substrate for oxidoreductases such as SAV0322 and SAV0323. The protein is Glycine cleavage system H-like protein of Staphylococcus aureus (strain Mu50 / ATCC 700699).